The primary structure comprises 194 residues: Large ribosomal subunit protein eL15 (194 aa).

The tract at residues 160-194 is disordered; the sequence is RGLTSAGKKGRGLMYKGKGTEKVRPSVRANSKKAK.

Belongs to the eukaryotic ribosomal protein eL15 family.

This Methanococcus maripaludis (strain C7 / ATCC BAA-1331) protein is Large ribosomal subunit protein eL15.